Here is a 314-residue protein sequence, read N- to C-terminus: Hydroxyacyl-coenzyme A dehydrogenase, mitochondrial (314 aa).

A mitochondrion-targeting transit peptide spans 1 to 12; it reads MAFVTRQFMRSV. Residues 34 to 39 and Asp-57 contribute to the NAD(+) site; that span reads GGGLMG. The CoA site is built by Ser-73 and Lys-80. At Lys-80 the chain carries N6-succinyllysine. An N6-acetyllysine; alternate mark is found at Lys-81 and Lys-87. An N6-succinyllysine; alternate mark is found at Lys-81 and Lys-87. Glu-122 serves as a coordination point for NAD(+). Lys-125 is modified (N6-acetyllysine). Residue Lys-127 coordinates NAD(+). Lys-127 bears the N6-(2-hydroxyisobutyryl)lysine mark. Position 136 is an N6-acetyllysine; alternate (Lys-136). An N6-succinyllysine; alternate modification is found at Lys-136. Positions 149 and 173 each coordinate NAD(+). Ser-149 provides a ligand contact to CoA. An N6-acetyllysine modification is found at Lys-179. N6-acetyllysine; alternate occurs at positions 185, 192, and 202. An N6-succinyllysine; alternate mark is found at Lys-185, Lys-192, and Lys-202. Lys-206 is subject to N6-succinyllysine. N6-acetyllysine; alternate is present on residues Lys-212 and Lys-241. N6-succinyllysine; alternate occurs at positions 212 and 241. Lys-305 lines the NAD(+) pocket. N6-acetyllysine; alternate is present on Lys-312. Lys-312 carries the post-translational modification N6-succinyllysine; alternate.

The protein belongs to the 3-hydroxyacyl-CoA dehydrogenase family. As to quaternary structure, homodimer. Interacts with GLUD1; this interaction inhibits the activation of glutamate dehydrogenase 1 (GLUD1). Succinylation at Lys-81, adjacent to a coenzyme A binding site. Desuccinylated by SIRT5. In terms of tissue distribution, expressed in liver, kidney, pancreas, heart and skeletal muscle.

Its subcellular location is the mitochondrion matrix. The enzyme catalyses a (3S)-3-hydroxyacyl-CoA + NAD(+) = a 3-oxoacyl-CoA + NADH + H(+). It carries out the reaction (3S)-3-hydroxybutanoyl-CoA + NAD(+) = acetoacetyl-CoA + NADH + H(+). The catalysed reaction is (3S)-hydroxydecanoyl-CoA + NAD(+) = 3-oxodecanoyl-CoA + NADH + H(+). It catalyses the reaction (3S)-hydroxyhexadecanoyl-CoA + NAD(+) = 3-oxohexadecanoyl-CoA + NADH + H(+). Its pathway is lipid metabolism; fatty acid beta-oxidation. In terms of biological role, mitochondrial fatty acid beta-oxidation enzyme that catalyzes the third step of the beta-oxidation cycle for medium and short-chain 3-hydroxy fatty acyl-CoAs (C4 to C10). Plays a role in the control of insulin secretion by inhibiting the activation of glutamate dehydrogenase 1 (GLUD1), an enzyme that has an important role in regulating amino acid-induced insulin secretion. Plays a role in the maintenance of normal spermatogenesis through the reduction of fatty acid accumulation in the testes. The sequence is that of Hydroxyacyl-coenzyme A dehydrogenase, mitochondrial (HADH) from Homo sapiens (Human).